Reading from the N-terminus, the 911-residue chain is Protein translocase subunit SecA (911 aa).

Residues Q86, 104-108, and D512 each bind ATP; that span reads GEGKT. 4 residues coordinate Zn(2+): C895, C897, C906, and H907.

Belongs to the SecA family. Monomer and homodimer. Part of the essential Sec protein translocation apparatus which comprises SecA, SecYEG and auxiliary proteins SecDF-YajC and YidC. The cofactor is Zn(2+).

The protein resides in the cell inner membrane. Its subcellular location is the cytoplasm. The enzyme catalyses ATP + H2O + cellular proteinSide 1 = ADP + phosphate + cellular proteinSide 2.. Part of the Sec protein translocase complex. Interacts with the SecYEG preprotein conducting channel. Has a central role in coupling the hydrolysis of ATP to the transfer of proteins into and across the cell membrane, serving both as a receptor for the preprotein-SecB complex and as an ATP-driven molecular motor driving the stepwise translocation of polypeptide chains across the membrane. This is Protein translocase subunit SecA from Bordetella bronchiseptica (strain ATCC BAA-588 / NCTC 13252 / RB50) (Alcaligenes bronchisepticus).